Consider the following 140-residue polypeptide: Large ribosomal subunit protein bL17 (140 aa).

This sequence belongs to the bacterial ribosomal protein bL17 family. Part of the 50S ribosomal subunit. Contacts protein L32.

This Hyphomonas neptunium (strain ATCC 15444) protein is Large ribosomal subunit protein bL17.